Reading from the N-terminus, the 307-residue chain is Oxygen-dependent coproporphyrinogen-III oxidase (307 aa).

Serine 99 is a substrate binding site. Positions 103 and 113 each coordinate a divalent metal cation. The Proton donor role is filled by histidine 113. 115–117 is a substrate binding site; it reads NVR. Positions 152 and 182 each coordinate a divalent metal cation. Residues 247-282 form an important for dimerization region; it reads YVEFNLVFDRGTLFGLQSGGRTESILLSMPPTAGWR. Residue 265 to 267 coordinates substrate; it reads GGR.

It belongs to the aerobic coproporphyrinogen-III oxidase family. Homodimer. The cofactor is a divalent metal cation.

Its subcellular location is the cytoplasm. It carries out the reaction coproporphyrinogen III + O2 + 2 H(+) = protoporphyrinogen IX + 2 CO2 + 2 H2O. Its pathway is porphyrin-containing compound metabolism; protoporphyrin-IX biosynthesis; protoporphyrinogen-IX from coproporphyrinogen-III (O2 route): step 1/1. Involved in the heme biosynthesis. Catalyzes the aerobic oxidative decarboxylation of propionate groups of rings A and B of coproporphyrinogen-III to yield the vinyl groups in protoporphyrinogen-IX. In Burkholderia pseudomallei (strain 1106a), this protein is Oxygen-dependent coproporphyrinogen-III oxidase.